The primary structure comprises 572 residues: MRTSQYLLSTLKETPADAEVVSHKLMLRAGMIRKLASGLYNWMPTGIRVLKKVEKIVREEMNNTGAIEISMPVVQPADLWQESGRWEQYGPELLRFVDRGDRPFVLGPTHEEVITDLIRNEVSSYKQLPLTLFQIQTKFRDEVRPRFGVMRSREFLMKDAYSFHATQTSLQETYDNMYEAYSKIFTRIGLDFRAVLADTGSIGGSASHEFQVLAASGEDDIVFSTESNYAANIELAEAVAPAHDRAVPTEDMHLVDTPNAKTIAELVEQFNLPIEKTVKTLMVHAAEGTSHKLIALLVRGDHELNEIKAEKLSLVASPLTFATEEEIRSIVGAGPGSLGPVNLPIPAIIDRSVAVMSDFGAGANINDKHYFGINWERDLPVPEVADIRNVVEGDASPDGKGTLLIKRGIEVGHIFQLGTKYSDAMKATVQGEDGHNQIVTMGCYGIGVTRIVAAAIEQNHDDRGIIWPDAIAPFQVAILPMNMHKSYRVKEVAEKLYADLRASGIDVIFDDRKERPGVMFADMELIGVPHTVVIGDRNLDNGEVEYKHRRNDEKQMLKLDNVVDYLKQQLGC.

The protein belongs to the class-II aminoacyl-tRNA synthetase family. ProS type 1 subfamily. As to quaternary structure, homodimer.

Its subcellular location is the cytoplasm. The catalysed reaction is tRNA(Pro) + L-proline + ATP = L-prolyl-tRNA(Pro) + AMP + diphosphate. In terms of biological role, catalyzes the attachment of proline to tRNA(Pro) in a two-step reaction: proline is first activated by ATP to form Pro-AMP and then transferred to the acceptor end of tRNA(Pro). As ProRS can inadvertently accommodate and process non-cognate amino acids such as alanine and cysteine, to avoid such errors it has two additional distinct editing activities against alanine. One activity is designated as 'pretransfer' editing and involves the tRNA(Pro)-independent hydrolysis of activated Ala-AMP. The other activity is designated 'posttransfer' editing and involves deacylation of mischarged Ala-tRNA(Pro). The misacylated Cys-tRNA(Pro) is not edited by ProRS. The polypeptide is Proline--tRNA ligase (Photorhabdus laumondii subsp. laumondii (strain DSM 15139 / CIP 105565 / TT01) (Photorhabdus luminescens subsp. laumondii)).